We begin with the raw amino-acid sequence, 159 residues long: Probable cyclic pyranopterin monophosphate synthase (159 aa).

Residues 74-76 and 110-111 each bind substrate; these read MCH and ME. Residue Asp-125 is part of the active site.

Belongs to the MoaC family. In terms of assembly, homohexamer; trimer of dimers.

It carries out the reaction (8S)-3',8-cyclo-7,8-dihydroguanosine 5'-triphosphate = cyclic pyranopterin phosphate + diphosphate. Its pathway is cofactor biosynthesis; molybdopterin biosynthesis. Its function is as follows. Catalyzes the conversion of (8S)-3',8-cyclo-7,8-dihydroguanosine 5'-triphosphate to cyclic pyranopterin monophosphate (cPMP). In Methanococcoides burtonii (strain DSM 6242 / NBRC 107633 / OCM 468 / ACE-M), this protein is Probable cyclic pyranopterin monophosphate synthase.